A 256-amino-acid chain; its full sequence is Thiazole synthase (256 aa).

Lys95 functions as the Schiff-base intermediate with DXP in the catalytic mechanism. 1-deoxy-D-xylulose 5-phosphate is bound by residues Gly156, 182–183 (AG), and 204–205 (NT).

Belongs to the ThiG family. As to quaternary structure, homotetramer. Forms heterodimers with either ThiH or ThiS.

Its subcellular location is the cytoplasm. The catalysed reaction is [ThiS sulfur-carrier protein]-C-terminal-Gly-aminoethanethioate + 2-iminoacetate + 1-deoxy-D-xylulose 5-phosphate = [ThiS sulfur-carrier protein]-C-terminal Gly-Gly + 2-[(2R,5Z)-2-carboxy-4-methylthiazol-5(2H)-ylidene]ethyl phosphate + 2 H2O + H(+). The protein operates within cofactor biosynthesis; thiamine diphosphate biosynthesis. Catalyzes the rearrangement of 1-deoxy-D-xylulose 5-phosphate (DXP) to produce the thiazole phosphate moiety of thiamine. Sulfur is provided by the thiocarboxylate moiety of the carrier protein ThiS. In vitro, sulfur can be provided by H(2)S. The sequence is that of Thiazole synthase from Enterobacter sp. (strain 638).